We begin with the raw amino-acid sequence, 146 residues long: Holo-[acyl-carrier-protein] synthase (146 aa).

Mg(2+) contacts are provided by Asp-9 and Glu-58.

This sequence belongs to the P-Pant transferase superfamily. AcpS family. It depends on Mg(2+) as a cofactor.

Its subcellular location is the cytoplasm. It catalyses the reaction apo-[ACP] + CoA = holo-[ACP] + adenosine 3',5'-bisphosphate + H(+). In terms of biological role, transfers the 4'-phosphopantetheine moiety from coenzyme A to a Ser of acyl-carrier-protein. This chain is Holo-[acyl-carrier-protein] synthase, found in Baumannia cicadellinicola subsp. Homalodisca coagulata.